We begin with the raw amino-acid sequence, 41 residues long: Large ribosomal subunit protein bL36 (41 aa).

It belongs to the bacterial ribosomal protein bL36 family.

In Stenotrophomonas maltophilia (strain R551-3), this protein is Large ribosomal subunit protein bL36.